Reading from the N-terminus, the 238-residue chain is Probable transcriptional regulatory protein YeeN (238 aa).

Belongs to the TACO1 family. YeeN subfamily.

It is found in the cytoplasm. The polypeptide is Probable transcriptional regulatory protein YeeN (Escherichia coli (strain UTI89 / UPEC)).